The sequence spans 153 residues: Large ribosomal subunit protein uL30 (153 aa).

The protein belongs to the universal ribosomal protein uL30 family. In terms of assembly, part of the 50S ribosomal subunit.

The chain is Large ribosomal subunit protein uL30 from Methanocella arvoryzae (strain DSM 22066 / NBRC 105507 / MRE50).